The sequence spans 222 residues: Cytidylate kinase (222 aa).

ATP is bound at residue 7-15; the sequence is GPAGAGKST.

The protein belongs to the cytidylate kinase family. Type 1 subfamily.

Its subcellular location is the cytoplasm. It catalyses the reaction CMP + ATP = CDP + ADP. It carries out the reaction dCMP + ATP = dCDP + ADP. This is Cytidylate kinase from Carboxydothermus hydrogenoformans (strain ATCC BAA-161 / DSM 6008 / Z-2901).